The chain runs to 3336 residues: Pericentrin (3336 aa).

Disordered regions lie at residues 1 to 71 (MEVE…DICK) and 81 to 100 (GAGGAFAAQPEDCDGEKRED). Basic and acidic residues predominate over residues 27–37 (TKGDSSHSEKK). The residue at position 44 (Ser-44) is a Phosphoserine. Phosphoserine is present on Ser-188. At Thr-191 the chain carries Phosphothreonine. Positions 258 to 553 (HTAQLELTQA…RLQGAREDAL (296 aa)) form a coiled coil. A disordered region spans residues 569–589 (KPEKGRKDHVDELEPERHKES). Phosphoserine is present on residues Ser-610 and Ser-682. 2 coiled-coil regions span residues 675 to 835 (TEHK…DALH) and 1010 to 1146 (TILT…MLKA). Residue Ser-1245 is modified to Phosphoserine. Residues 1299–1949 (NEETAQVVRK…FLRCQVELDR (651 aa)) are a coiled coil. Positions 1619–1638 (TLDAGRCPEPPSGSPPEGPE) are disordered. The span at 1626-1636 (PEPPSGSPPEG) shows a compositional bias: pro residues. Ser-1653 and Ser-1712 each carry phosphoserine. Residues 1954-1974 (RATAHTRVPGAHPQPRMDGGA) are disordered. At Ser-2044 the chain carries Phosphoserine. Residues 2064 to 2082 (VDLVAQVKQLQEKLNRLLY) adopt a coiled-coil conformation. The interval 2168–2214 (SLIPDEMPDSPIQEKSECQDMSLSSPTSVLGGSRHQSHTAEAGPRKS) is disordered. 5 positions are modified to phosphoserine: Ser-2177, Ser-2192, Ser-2225, Ser-2226, and Ser-2327. Over residues 2186 to 2197 (QDMSLSSPTSVL) the composition is skewed to polar residues. The segment at 2318–2374 (SFDSQETLSSPPPGLEGKADRSEKSDGSGFGARLSPGSGGPEAQTAGPVTPASISGR) is disordered. A compositionally biased stretch (basic and acidic residues) spans 2334–2343 (GKADRSEKSD). A phosphoserine mark is found at Ser-2352, Ser-2355, Ser-2477, and Ser-2486. A coiled-coil region spans residues 2536 to 3086 (QEKLQHLRTA…EKLLKHHLQK (551 aa)). Disordered regions lie at residues 2875 to 2910 (LEQSHPRLKEQEGRKAARRSAEARQSPAAAEQWRKW) and 3084 to 3126 (LQKG…EEAH). Basic and acidic residues-rich tracts occupy residues 2876 to 2896 (EQSHPRLKEQEGRKAARRSAE) and 3092 to 3102 (RSERSAWKPDE). The tract at residues 2983–3246 (LSAARLLTSF…ARQPQSPPRT (264 aa)) is interaction with NEK2. Residues 3195 to 3208 (RFRTAVRVVIAILR) form a calmodulin-binding region. The disordered stretch occupies residues 3224 to 3300 (ALAQGKAPRP…RSLTASQDPE (77 aa)). The segment covering 3226-3240 (AQGKAPRPGPRARQP) has biased composition (low complexity). Residues 3283-3297 (PSPNSRLERSLTASQ) show a composition bias toward polar residues. Position 3302 is a phosphoserine (Ser-3302).

In terms of assembly, interacts with CHD3. Interacts with CHD4; the interaction regulates centrosome integrity. Interacts with DISC1 and PCM1. Binds calmodulin. Interacts with CDK5RAP2; the interaction is leading to centrosomal localization of PCNT and CDK5RAP2. Interacts with isoform 1 of NEK2. Interacts with CEP131. Interacts with CCDC13. Interacts with CEP68. Interacts with ATF5; the ATF5:PCNT:polyglutamylated tubulin (PGT) tripartite unites the mother centriole and the pericentriolar material (PCM) in the centrosome. Cleaved during mitotis which leads to removal of CDK5RAP2 from the centrosome and promotes centriole disengagement and subsequent centriole separation. The C-terminal fragment is rapidly degraded following cleavage. Post-translationally, ubiquitinated by TRIM43; leading to proteasomal degradation. In terms of tissue distribution, expressed in all tissues tested, including placenta, liver, kidney and thymus.

The protein localises to the cytoplasm. It localises to the cytoskeleton. Its subcellular location is the microtubule organizing center. The protein resides in the centrosome. Its function is as follows. Integral component of the filamentous matrix of the centrosome involved in the initial establishment of organized microtubule arrays in both mitosis and meiosis. Plays a role, together with DISC1, in the microtubule network formation. Is an integral component of the pericentriolar material (PCM). May play an important role in preventing premature centrosome splitting during interphase by inhibiting NEK2 kinase activity at the centrosome. In Homo sapiens (Human), this protein is Pericentrin (PCNT).